The primary structure comprises 487 residues: Sodium-coupled neutral amino acid symporter 1 (487 aa).

Topologically, residues 1–74 are cytoplasmic; that stretch reads MMHFKSGLEL…EYIPGTTSLG (74 aa). The residue at position 6 (serine 6) is a Phosphoserine. Residue threonine 11 is modified to Phosphothreonine. Residues serine 25, serine 28, serine 49, and serine 52 each carry the phosphoserine modification. Phosphothreonine is present on threonine 54. Serine 56 is modified (phosphoserine). The helical transmembrane segment at 75 to 97 threads the bilayer; the sequence is MSVFNLSNAIMGSGILGLAFALA. The Extracellular segment spans residues 98-112; sequence NTGILLFLVLLTSVT. Residues 113 to 133 form a helical membrane-spanning segment; the sequence is LLSIYSINLLLICSKETGCMV. Over 134–147 the chain is Cytoplasmic; it reads YEKLGEQVFGTTGK. The helical transmembrane segment at 148-168 threads the bilayer; sequence FVIFGATSLQNTGAMLSYLFI. Topologically, residues 169-188 are extracellular; that stretch reads VKNELPSAIKFLMGKEETFS. A helical membrane pass occupies residues 189-211; that stretch reads AWYVDGRVLVVIVTFGIILPLCL. The Cytoplasmic segment spans residues 212-216; it reads LKNLG. Residues 217–237 form a helical membrane-spanning segment; sequence YLGYTSGFSLSCMVFFLIVVI. The Extracellular portion of the chain corresponds to 238–275; the sequence is YKKFQIPCIVPELNSTISANSTNADTCTPKYVTFNSKT. Cysteine 245 and cysteine 264 form a disulfide bridge. Residues asparagine 251 and asparagine 257 are each glycosylated (N-linked (GlcNAc...) asparagine). The chain crosses the membrane as a helical span at residues 276 to 296; the sequence is VYALPTIAFAFVCHPSVLPIY. At 297–312 the chain is on the cytoplasmic side; it reads SELKDRSQKKMQMVSN. The chain crosses the membrane as a helical span at residues 313 to 333; the sequence is ISFFAMFVMYFLTAIFGYLTF. The Extracellular segment spans residues 334–350; sequence YDNVQSDLLHKYQSKDD. The helical transmembrane segment at 351–371 threads the bilayer; sequence ILILTVRLAVIVAVILTVPVL. The Cytoplasmic segment spans residues 372-393; that stretch reads FFTVRSSLFELAKKTKFNLCRH. A helical membrane pass occupies residues 394-414; it reads TVVTCILLVVINLLVIFIPSM. Residues 415 to 416 are Extracellular-facing; it reads KD. The helical transmembrane segment at 417–437 threads the bilayer; that stretch reads IFGVVGVTSANMLIFILPSSL. Residues 438–452 lie on the Cytoplasmic side of the membrane; the sequence is YLKITDQDGDKGTQR. The helical transmembrane segment at 453-473 threads the bilayer; it reads IWAALFLGLGVLFSLVSIPLV. Topologically, residues 474-487 are extracellular; sequence IYDWACSSSSDEGH.

The protein belongs to the amino acid/polyamine transporter 2 family. Post-translationally, N-glycosylation plays an important role in the L-glutamine transport. Expressed in the cerebral cortex by pyramidal and GABAergic neurons, astrocytes and other non-neuronal cells (at protein level). Expressed in placenta, heart, lung, skeletal muscle, spleen, stomach and testis. Highly expressed in cytotrophoblast cells from term placenta.

The protein resides in the cell membrane. The enzyme catalyses L-glutamine(in) + Na(+)(in) = L-glutamine(out) + Na(+)(out). It catalyses the reaction L-alanine(in) + Na(+)(in) = L-alanine(out) + Na(+)(out). The catalysed reaction is L-asparagine(in) + Na(+)(in) = L-asparagine(out) + Na(+)(out). It carries out the reaction L-histidine(in) + Na(+)(in) = L-histidine(out) + Na(+)(out). The enzyme catalyses L-serine(in) + Na(+)(in) = L-serine(out) + Na(+)(out). It catalyses the reaction L-cysteine(in) + Na(+)(in) = L-cysteine(out) + Na(+)(out). The catalysed reaction is L-methionine(in) + Na(+)(in) = L-methionine(out) + Na(+)(out). It carries out the reaction glycine(in) + Na(+)(in) = glycine(out) + Na(+)(out). The enzyme catalyses L-threonine(in) + Na(+)(in) = L-threonine(out) + Na(+)(out). It catalyses the reaction L-proline(in) + Na(+)(in) = L-proline(out) + Na(+)(out). Inhibited by alpha-(methylamino)isobutyric acid (MeAIB). Inhibited by lithium, potassium, choline ions, N-methylglucamine. The pH dependence has an allosteric effect on the transport. Its function is as follows. Symporter that cotransports short-chain neutral amino acids and sodium ions from the extraccellular to the intracellular side of the cell membrane. The transport is elctrogenic, pH dependent and driven by the Na(+) electrochemical gradient. Participates in the astroglia-derived glutamine transport into GABAergic interneurons for neurotransmitter GABA de novo synthesis. May also contributes to amino acid transport in placental trophoblasts. Also regulates synaptic plasticity. This is Sodium-coupled neutral amino acid symporter 1 (SLC38A1) from Homo sapiens (Human).